Here is a 256-residue protein sequence, read N- to C-terminus: H-2 class II histocompatibility antigen, A-B alpha chain (256 aa).

The N-terminal stretch at 1–23 (MPRSRALILGVLALTTMLSLCGG) is a signal peptide. The segment at 24-111 (EDDIEADHVG…KRSNSTPATN (88 aa)) is alpha-1. Residues 24–218 (EDDIEADHVG…IPAPMSELTE (195 aa)) are Extracellular-facing. Residues 112–205 (EAPQATVFPK…GLEEPVLKHW (94 aa)) form an alpha-2 region. Residues 114 to 206 (PQATVFPKSP…LEEPVLKHWE (93 aa)) form the Ig-like C1-type domain. C134 and C190 form a disulfide bridge. An N-linked (GlcNAc...) asparagine glycan is attached at N145. The segment at 206 to 218 (EPEIPAPMSELTE) is connecting peptide. A helical transmembrane segment spans residues 219–244 (TVVCALGLSVGLVGIVVGTIFIIQGL). Residues 245–256 (RSGGTSRHPGPL) are Cytoplasmic-facing.

It belongs to the MHC class II family.

It is found in the membrane. This is H-2 class II histocompatibility antigen, A-B alpha chain (H2-Aa) from Mus musculus (Mouse).